A 151-amino-acid polypeptide reads, in one-letter code: Small ribosomal subunit protein uS13 (151 aa).

It belongs to the universal ribosomal protein uS13 family. Part of the 30S ribosomal subunit. Forms a loose heterodimer with protein S19. Forms two bridges to the 50S subunit in the 70S ribosome.

Functionally, located at the top of the head of the 30S subunit, it contacts several helices of the 16S rRNA. In the 70S ribosome it contacts the 23S rRNA (bridge B1a) and protein L5 of the 50S subunit (bridge B1b), connecting the 2 subunits; these bridges are implicated in subunit movement. The sequence is that of Small ribosomal subunit protein uS13 from Methanospirillum hungatei JF-1 (strain ATCC 27890 / DSM 864 / NBRC 100397 / JF-1).